A 250-amino-acid polypeptide reads, in one-letter code: Probable transcriptional regulatory protein PERMA_0079 (250 aa).

This sequence belongs to the TACO1 family.

The protein resides in the cytoplasm. In Persephonella marina (strain DSM 14350 / EX-H1), this protein is Probable transcriptional regulatory protein PERMA_0079.